We begin with the raw amino-acid sequence, 274 residues long: 2-amino-4,5-dihydroxy-6-oxo-7-(phosphonooxy)heptanoate synthase (274 aa).

This sequence belongs to the DeoC/FbaB aldolase family. GriI subfamily. As to quaternary structure, homodecamer.

It carries out the reaction 2-amino-4,5-dihydroxy-6-oxo-7-(phosphooxy)heptanoate = L-aspartate 4-semialdehyde + dihydroxyacetone phosphate. Functionally, catalyzes aldol condensation between L-aspartate-4-semialdehyde (ASA) and dihydroxyacetone phosphate (DHAP), to form 2-amino-4,5-dihydroxy-6-oxo-7-(phosphonooxy)heptanoate. The protein is 2-amino-4,5-dihydroxy-6-oxo-7-(phosphonooxy)heptanoate synthase (griI) of Streptomyces griseus subsp. griseus (strain JCM 4626 / CBS 651.72 / NBRC 13350 / KCC S-0626 / ISP 5235).